Consider the following 234-residue polypeptide: Adenosine 5'-phosphosulfate reductase (234 aa).

[4Fe-4S] cluster is bound by residues Cys120, Cys121, Cys203, and Cys206. Cys229 serves as the catalytic Nucleophile; cysteine thiosulfonate intermediate.

It belongs to the PAPS reductase family. CysH subfamily. It depends on [4Fe-4S] cluster as a cofactor.

It localises to the cytoplasm. The enzyme catalyses [thioredoxin]-disulfide + sulfite + AMP + 2 H(+) = adenosine 5'-phosphosulfate + [thioredoxin]-dithiol. It participates in sulfur metabolism; hydrogen sulfide biosynthesis; sulfite from sulfate. In terms of biological role, catalyzes the formation of sulfite from adenosine 5'-phosphosulfate (APS) using thioredoxin as an electron donor. This is Adenosine 5'-phosphosulfate reductase from Bacillus cereus (strain ZK / E33L).